The primary structure comprises 1151 residues: Nardilysin (1151 aa).

The first 20 residues, 1–20 (MLRRVTVAAVCATRRKLCEA), serve as a signal peptide directing secretion. Disordered stretches follow at residues 53 to 108 (RNKA…KSPS) and 133 to 207 (MEGK…KKTT). S86, S94, and S96 each carry phosphoserine. A compositionally biased stretch (acidic residues) spans 141–198 (TDDEEEEEVEEEEEDDDEDSGAEIEDDDEEGFDDEDEFDDEHDDDLDTEDNELEELEE). H233 contacts Zn(2+). E236 acts as the Proton acceptor in catalysis. Positions 237 and 314 each coordinate Zn(2+).

The protein belongs to the peptidase M16 family. In terms of assembly, interacts with BACE1 and NRG1. Requires Zn(2+) as cofactor. As to expression, primarily in adult heart, skeletal muscle, and testis and at much lower levels in other tissues.

Its subcellular location is the mitochondrion. The protein resides in the cell projection. It localises to the dendrite. It carries out the reaction Hydrolysis of polypeptides, preferably at -Xaa-|-Arg-Lys-, and less commonly at -Arg-|-Arg-Xaa-, in which Xaa is not Arg or Lys.. Functionally, cleaves peptide substrates on the N-terminus of arginine residues in dibasic pairs. Is a critical activator of BACE1- and ADAM17-mediated pro-neuregulin ectodomain shedding, involved in the positive regulation of axonal maturation and myelination. Required for proper functioning of 2-oxoglutarate dehydrogenase (OGDH). The sequence is that of Nardilysin from Homo sapiens (Human).